Reading from the N-terminus, the 1233-residue chain is Structural maintenance of chromosomes protein 1A (1233 aa).

Position 32–39 (32–39) interacts with ATP; that stretch reads GPNGSGKS. 2 coiled-coil regions span residues 104–124 and 163–503; these read EYKI…LEKL and ELAQ…KAEI. Positions 284–293 are enriched in basic and acidic residues; that stretch reads IKEKDSELNQ. Disordered stretches follow at residues 284-308 and 348-369; these read IKEK…TSHK and QEFE…TLEE. S358 and S360 each carry phosphoserine. The SMC hinge domain maps to 515-629; the sequence is VYGRLIDLCQ…DNVEDARRIA (115 aa). N6-acetyllysine occurs at positions 648 and 713. The stretch at 660–935 forms a coiled coil; that stretch reads KAKARRWDEK…RHNLLQACKM (276 aa). The interval 947 to 966 is disordered; sequence MDDISQEEGSSQGEDSVSGS. Positions 953–966 are enriched in low complexity; that stretch reads EEGSSQGEDSVSGS. The residue at position 957 (S957) is a Phosphoserine; by ATM. S962 carries the phosphoserine modification. S966 carries the post-translational modification Phosphoserine; by ATM and ATR. S970 carries the phosphoserine modification. Positions 991–1068 form a coiled coil; sequence KDAQAEEEIK…FEQIKKERFD (78 aa). At K1037 the chain carries N6-acetyllysine.

The protein belongs to the SMC family. SMC1 subfamily. Forms a heterodimer with SMC3 in cohesin complexes. Cohesin complexes are composed of the SMC1 (SMC1A or SMC1B) and SMC3 heterodimer attached via their SMC hinge domain, RAD21 which link them, and one STAG protein (STAG1, STAG2 or STAG3), which interacts with RAD21. In germ cell cohesin complexes, SMC1A is mutually exclusive with SMC1B. Interacts with BRCA1. Found in a complex with CDCA5, SMC3 and RAD21, PDS5A/SCC-112 and PDS5B/APRIN. Interacts with NDC80. Interacts with BRAT1. Found in a complex containing POLE and SMC3. Interacts with RPGR, STAG3 and SYCP2. The cohesin complex interacts with the cohesin loading complex subunits NIPBL/Scc2 (via HEAT repeats) and MAU2/Scc4. NIPBL directly contacts all members of the complex, RAD21, SMC1A/B, SMC3 and STAG1. In terms of processing, ubiquitinated by the DCX(DCAF15) complex, leading to its degradation. Phosphorylated by ATM upon ionizing radiation in a NBS1-dependent manner. Phosphorylated by ATR upon DNA methylation in a MSH2/MSH6-dependent manner. Phosphorylation of Ser-957 and Ser-966 activates it and is required for S-phase checkpoint activation.

The protein resides in the nucleus. It localises to the chromosome. The protein localises to the centromere. It is found in the kinetochore. In terms of biological role, involved in chromosome cohesion during cell cycle and in DNA repair. Central component of cohesin complex. The cohesin complex is required for the cohesion of sister chromatids after DNA replication. The cohesin complex apparently forms a large proteinaceous ring within which sister chromatids can be trapped. At anaphase, the complex is cleaved and dissociates from chromatin, allowing sister chromatids to segregate. The cohesin complex may also play a role in spindle pole assembly during mitosis. Involved in DNA repair via its interaction with BRCA1 and its related phosphorylation by ATM, or via its phosphorylation by ATR. Works as a downstream effector both in the ATM/NBS1 branch and in the ATR/MSH2 branch of S-phase checkpoint. The sequence is that of Structural maintenance of chromosomes protein 1A (SMC1A) from Homo sapiens (Human).